A 198-amino-acid chain; its full sequence is NAD(P)H dehydrogenase (quinone) (198 aa).

The Flavodoxin-like domain maps to 4-189; it reads VLVLYYSMYG…SIARYQGEYV (186 aa). FMN is bound by residues 10–15 and 78–80; these read SMYGHI and TRF. Y12 is a binding site for NAD(+). W98 serves as a coordination point for substrate. FMN is bound by residues 113 to 118 and H133; that span reads STGTGG.

The protein belongs to the WrbA family. FMN is required as a cofactor.

The catalysed reaction is a quinone + NADH + H(+) = a quinol + NAD(+). It catalyses the reaction a quinone + NADPH + H(+) = a quinol + NADP(+). This is NAD(P)H dehydrogenase (quinone) from Escherichia coli (strain SE11).